A 559-amino-acid chain; its full sequence is Germacrene A synthase (559 aa).

The Mg(2+) site is built by D312, D316, D456, T460, and E464. The DDXXD motif motif lies at 312 to 316; that stretch reads DDTYD.

This sequence belongs to the terpene synthase family. In terms of assembly, monomer. Mg(2+) serves as cofactor. In terms of tissue distribution, expressed in glandular trichomes of all aerial tissues, with highest levels in tissues accumulating parthenolide (e.g. flowers and, to some extent, leaves).

It carries out the reaction (2E,6E)-farnesyl diphosphate = (+)-(R)-germacrene A + diphosphate. Its pathway is secondary metabolite biosynthesis; terpenoid biosynthesis. Its function is as follows. Sesquiterpene synthase involved in germacrene A biosynthesis. Germacrene A is a precursor of several sesquiterpene lactones. This chain is Germacrene A synthase, found in Tanacetum parthenium (Feverfew).